We begin with the raw amino-acid sequence, 224 residues long: Claudin-19 (224 aa).

Over 1-7 (MANSGLQ) the chain is Cytoplasmic. Residues 8–28 (LLGYFLALGGWVGIIASTALP) traverse the membrane as a helical segment. The Extracellular portion of the chain corresponds to 29 to 81 (QWKQSSYAGDAIITAVGLYEGLWMSCASQSTGQVQCKLYDSLLALDGHIQSAR). The cysteines at positions 54 and 64 are disulfide-linked. The helical transmembrane segment at 82–102 (ALMVVAVLLGFVAMVLSVVGM) threads the bilayer. Over 103–117 (KCTRVGDSNPTAKSR) the chain is Cytoplasmic. The helical transmembrane segment at 118–138 (VAISGGALFLLAGLCTLTAVS) threads the bilayer. The Extracellular portion of the chain corresponds to 139–160 (WYATLVTQEFFNPSTPVNARYE). Residues 161–181 (FGPALFVGWASAGLAMLGGSF) form a helical membrane-spanning segment. The Cytoplasmic portion of the chain corresponds to 182 to 224 (LCCTCPEPERANSIPQPYRSGPSTAAREPVVKLPASVKGPLGV).

This sequence belongs to the claudin family. Can form homo- and heteropolymeric tight junction strands. Interacts with other claudins including CLDN3, CLDN10, CLDN16 and CLDN18 with highest affinity for CLDN16. Interacts (via PDZ-binding motif TRV) with TJP1 (via PDZ domain). In terms of assembly, (Microbial infection) Interacts (via both extracellular domains) with Clostridium perfringens enterotoxin CPE; the interaction disrupts claudin assembly in tight junctions. In terms of tissue distribution, expressed in the corticomedullary axis of the TAL, specifically in the cortex and the outer stripe of outer medulla (OSOM) zone (at protein level). Expressed in peripheral nervous system, in Schwan cells (at protein level).

The protein resides in the cell junction. Its subcellular location is the tight junction. It is found in the cell membrane. It catalyses the reaction Mg(2+)(in) = Mg(2+)(out). The catalysed reaction is Ca(2+)(in) = Ca(2+)(out). The enzyme catalyses Na(+)(in) = Na(+)(out). It carries out the reaction K(+)(in) = K(+)(out). It catalyses the reaction Rb(+)(in) = Rb(+)(out). The catalysed reaction is Cs(+)(in) = Cs(+)(out). The enzyme catalyses Li(+)(in) = Li(+)(out). Functionally, forms paracellular channels: coassembles with CLDN16 into tight junction strands with cation-selective channels through the strands, conveying epithelial permeability in a process known as paracellular tight junction permeability. Involved in the maintenance of ion gradients along the nephron. In the thick ascending limb (TAL) of Henle's loop, facilitates sodium paracellular permeability from the interstitial compartment to the lumen, contributing to the lumen-positive transepithelial potential that drives paracellular magnesium and calcium reabsorption. Forms paracellular barriers on its own. In the peripheral nervous system, represents a major constituent of the tight junctions in Schwann cells and contributes to electrical sealing. During retinal neurogenesis, may regulate the barrier properties of tight junctions in retinal pigment epithelium, required for proper retinal tissue differentiation and vision. The protein is Claudin-19 of Mus musculus (Mouse).